The chain runs to 697 residues: Glycine--tRNA ligase beta subunit (697 aa).

The protein belongs to the class-II aminoacyl-tRNA synthetase family. As to quaternary structure, tetramer of two alpha and two beta subunits.

It localises to the cytoplasm. It carries out the reaction tRNA(Gly) + glycine + ATP = glycyl-tRNA(Gly) + AMP + diphosphate. This Ralstonia nicotianae (strain ATCC BAA-1114 / GMI1000) (Ralstonia solanacearum) protein is Glycine--tRNA ligase beta subunit.